The following is a 354-amino-acid chain: 5,10-methenyltetrahydromethanopterin hydrogenase (354 aa).

Belongs to the HMD family.

It catalyses the reaction 5,10-methenyl-5,6,7,8-tetrahydromethanopterin + H2 = 5,10-methylenetetrahydromethanopterin + H(+). The protein operates within one-carbon metabolism; methanogenesis from CO(2); 5,10-methylene-5,6,7,8-tetrahydromethanopterin from 5,10-methenyl-5,6,7,8-tetrahydromethanopterin (hydrogen route): step 1/1. Functionally, catalyzes the reversible reduction of methenyl-H(4)MPT(+) to methylene-H(4)MPT. The chain is 5,10-methenyltetrahydromethanopterin hydrogenase from Methanococcus maripaludis (strain C7 / ATCC BAA-1331).